Consider the following 211-residue polypeptide: Ribosome maturation factor RimM (211 aa).

Residues Pro-111 to Leu-182 form the PRC barrel domain. The tract at residues Glu-184–Arg-211 is disordered. The span at Glu-189 to Ala-204 shows a compositional bias: low complexity.

This sequence belongs to the RimM family. In terms of assembly, binds ribosomal protein uS19.

It localises to the cytoplasm. An accessory protein needed during the final step in the assembly of 30S ribosomal subunit, possibly for assembly of the head region. Essential for efficient processing of 16S rRNA. May be needed both before and after RbfA during the maturation of 16S rRNA. It has affinity for free ribosomal 30S subunits but not for 70S ribosomes. The protein is Ribosome maturation factor RimM of Clavibacter michiganensis subsp. michiganensis (strain NCPPB 382).